Here is a 362-residue protein sequence, read N- to C-terminus: Phosphoserine aminotransferase (362 aa).

R43 contacts L-glutamate. Pyridoxal 5'-phosphate contacts are provided by residues A77 to R78, W103, T153, D173, and Q196. K197 carries the post-translational modification N6-(pyridoxal phosphate)lysine.

This sequence belongs to the class-V pyridoxal-phosphate-dependent aminotransferase family. SerC subfamily. Homodimer. Pyridoxal 5'-phosphate is required as a cofactor.

The protein localises to the cytoplasm. It catalyses the reaction O-phospho-L-serine + 2-oxoglutarate = 3-phosphooxypyruvate + L-glutamate. It carries out the reaction 4-(phosphooxy)-L-threonine + 2-oxoglutarate = (R)-3-hydroxy-2-oxo-4-phosphooxybutanoate + L-glutamate. It participates in amino-acid biosynthesis; L-serine biosynthesis; L-serine from 3-phospho-D-glycerate: step 2/3. Its pathway is cofactor biosynthesis; pyridoxine 5'-phosphate biosynthesis; pyridoxine 5'-phosphate from D-erythrose 4-phosphate: step 3/5. Functionally, catalyzes the reversible conversion of 3-phosphohydroxypyruvate to phosphoserine and of 3-hydroxy-2-oxo-4-phosphonooxybutanoate to phosphohydroxythreonine. This chain is Phosphoserine aminotransferase, found in Legionella pneumophila subsp. pneumophila (strain Philadelphia 1 / ATCC 33152 / DSM 7513).